The chain runs to 274 residues: N-acetylmuramic acid 6-phosphate etherase (274 aa).

In terms of domain architecture, SIS spans 52 to 215 (IVPRMEQGGR…STSIMIRLGR (164 aa)). Residue glutamate 80 is the Proton donor of the active site. The active site involves glutamate 111.

This sequence belongs to the GCKR-like family. MurNAc-6-P etherase subfamily. In terms of assembly, homodimer.

It carries out the reaction N-acetyl-D-muramate 6-phosphate + H2O = N-acetyl-D-glucosamine 6-phosphate + (R)-lactate. It functions in the pathway amino-sugar metabolism; N-acetylmuramate degradation. Functionally, specifically catalyzes the cleavage of the D-lactyl ether substituent of MurNAc 6-phosphate, producing GlcNAc 6-phosphate and D-lactate. This is N-acetylmuramic acid 6-phosphate etherase from Porphyromonas gingivalis (strain ATCC 33277 / DSM 20709 / CIP 103683 / JCM 12257 / NCTC 11834 / 2561).